Here is a 348-residue protein sequence, read N- to C-terminus: 3'-dehydrocarminate deglycosidase alpha subunit (348 aa).

Glu145 provides a ligand contact to Mg(2+). His147 acts as the Proton acceptor in catalysis. Residues Asp177, His275, and Glu311 each coordinate Mg(2+).

It belongs to the C-glycoside deglycosidase alpha subunit family. As to quaternary structure, heterodimer composed of an alpha subunit (CarB) and a beta subunit (CarC). It depends on Mg(2+) as a cofactor.

It carries out the reaction 3'-dehydrocarminate + H(+) = kermesate + 1,5-anhydro-D-erythro-hex-1-en-3-ulose. Activity is strongly reduced in the presence of chelating agents. In terms of biological role, carbon-carbon bond-cleaving enzyme which participates in a carminate degradation pathway. Cleaves the C-C bond in 3'-dehydrocarminate to form kermesate. Also shows weak activity with other C-glycosides, such as 3''-dehydropuerarin (3''-oxo-puerarin), 3''-dehydroisoorientin (3''-oxo-homoorientin) and 3'-dehydromangiferin (3'-oxo-mangiferin). This Microbacterium sp protein is 3'-dehydrocarminate deglycosidase alpha subunit.